We begin with the raw amino-acid sequence, 129 residues long: Lysozyme C (129 aa).

The C-type lysozyme domain maps to 1–129 (KVYGRCELAA…VHAWIRGCRL (129 aa)). 4 disulfide bridges follow: C6-C127, C30-C115, C64-C80, and C76-C94. Active-site residues include E35 and D52.

This sequence belongs to the glycosyl hydrolase 22 family. Monomer.

The protein localises to the secreted. It carries out the reaction Hydrolysis of (1-&gt;4)-beta-linkages between N-acetylmuramic acid and N-acetyl-D-glucosamine residues in a peptidoglycan and between N-acetyl-D-glucosamine residues in chitodextrins.. Lysozymes have primarily a bacteriolytic function; those in tissues and body fluids are associated with the monocyte-macrophage system and enhance the activity of immunoagents. The polypeptide is Lysozyme C (LYZ) (Pavo cristatus (Indian peafowl)).